The primary structure comprises 390 residues: Tuftelin (390 aa).

Coiled-coil stretches lie at residues 88–126 (DKMIHEKNINQLKSEVQYIQEARNCLQKLREDISSKLDR) and 162–351 (DTCI…IEKQ). Positions 358-390 (STQARAKTENPGSIRISKPPSPKPMPVIRVVET) are disordered.

The protein belongs to the tuftelin family. As to quaternary structure, interacts with TFIP11. Expressed in the epidermis (at protein level). Present in the extracellular enamel and is mainly associated with the crystal component.

It localises to the secreted. Involved in the structural organization of the epidermis. Involved in the mineralization and structural organization of enamel. The sequence is that of Tuftelin (TUFT1) from Homo sapiens (Human).